Here is a 148-residue protein sequence, read N- to C-terminus: Lysozyme C (148 aa).

Positions 1–18 (MKALLLLGLLLLSVTVQG) are cleaved as a signal peptide. The C-type lysozyme domain maps to 19-148 (KIFERCDLAR…VSQYVRNCGV (130 aa)). 4 cysteine pairs are disulfide-bonded: cysteine 24–cysteine 146, cysteine 48–cysteine 134, cysteine 83–cysteine 99, and cysteine 95–cysteine 113. Active-site residues include glutamate 53 and aspartate 71.

This sequence belongs to the glycosyl hydrolase 22 family. In terms of assembly, monomer.

The enzyme catalyses Hydrolysis of (1-&gt;4)-beta-linkages between N-acetylmuramic acid and N-acetyl-D-glucosamine residues in a peptidoglycan and between N-acetyl-D-glucosamine residues in chitodextrins.. In terms of biological role, lysozymes have primarily a bacteriolytic function; those in tissues and body fluids are associated with the monocyte-macrophage system and enhance the activity of immunoagents. This is Lysozyme C (LYZ) from Halichoerus grypus (Gray seal).